Here is a 300-residue protein sequence, read N- to C-terminus: Acetylglutamate kinase (300 aa).

Residues 73–74, R95, and N197 contribute to the substrate site; that span reads GG.

Belongs to the acetylglutamate kinase family. ArgB subfamily.

It localises to the cytoplasm. It catalyses the reaction N-acetyl-L-glutamate + ATP = N-acetyl-L-glutamyl 5-phosphate + ADP. It functions in the pathway amino-acid biosynthesis; L-arginine biosynthesis; N(2)-acetyl-L-ornithine from L-glutamate: step 2/4. Catalyzes the ATP-dependent phosphorylation of N-acetyl-L-glutamate. The sequence is that of Acetylglutamate kinase from Bordetella avium (strain 197N).